The following is a 356-amino-acid chain: Cytochrome b translation regulator cbp7 (356 aa).

In terms of assembly, component of a complex, at least composed of cbp7 and cbp8.

It localises to the mitochondrion. Functionally, translation factor for cob1/cytochrome b; plays a role in cob1 mRNA stabilization and required for correct folding of the protein. This is Cytochrome b translation regulator cbp7 from Schizosaccharomyces pombe (strain 972 / ATCC 24843) (Fission yeast).